A 378-amino-acid chain; its full sequence is Palmitoyltransferase PFA4 (378 aa).

The Cytoplasmic portion of the chain corresponds to 1-9; that stretch reads MPVKLRWPW. A helical membrane pass occupies residues 10-30; the sequence is LGIAIPTFLISFIGYGAHYFI. Over 31–40 the chain is Lumenal; it reads LSNFLSVPKQ. The chain crosses the membrane as a helical span at residues 41-61; that stretch reads ITFEFCLSMIWLSYYLAICTN. Topologically, residues 62–119 are cytoplasmic; it reads PGRPLPNYKPPPDIWRNFCKKCQSYKPERSHHCKTCNQCVLMMDHHCPWTMNCVGFAN. The DHHC domain occupies 78 to 128; the sequence is NFCKKCQSYKPERSHHCKTCNQCVLMMDHHCPWTMNCVGFANYPHFLRFLF. Catalysis depends on Cys-108, which acts as the S-palmitoyl cysteine intermediate. A helical transmembrane segment spans residues 120–140; that stretch reads YPHFLRFLFWIIVTTSVLFCI. Residues 141 to 164 are Lumenal-facing; that stretch reads QAKRIYFIWQQRHLPGYFFKKSEL. The chain crosses the membrane as a helical span at residues 165 to 185; the sequence is IFLTISSPLNSFVLLTITILF. The Cytoplasmic portion of the chain corresponds to 186 to 378; it reads LRCLFNQILN…DDFGVDVDME (193 aa).

Belongs to the DHHC palmitoyltransferase family. PFA4 subfamily. In terms of processing, autopalmitoylated.

It is found in the endoplasmic reticulum membrane. It carries out the reaction L-cysteinyl-[protein] + hexadecanoyl-CoA = S-hexadecanoyl-L-cysteinyl-[protein] + CoA. Its function is as follows. Mediates the reversible addition of palmitate to target proteins, thereby regulating their membrane association and biological function. Palmitoylates several amino acid permeases. Palmitoylates chitin synthase CHS3, which is required for its proper export from the ER. Can palmitoylate RAS2 in vitro. The chain is Palmitoyltransferase PFA4 from Saccharomyces cerevisiae (strain ATCC 204508 / S288c) (Baker's yeast).